The sequence spans 158 residues: Transcription elongation factor GreA (158 aa).

The protein belongs to the GreA/GreB family.

Functionally, necessary for efficient RNA polymerase transcription elongation past template-encoded arresting sites. The arresting sites in DNA have the property of trapping a certain fraction of elongating RNA polymerases that pass through, resulting in locked ternary complexes. Cleavage of the nascent transcript by cleavage factors such as GreA or GreB allows the resumption of elongation from the new 3'terminus. GreA releases sequences of 2 to 3 nucleotides. This is Transcription elongation factor GreA from Bacillus licheniformis (strain ATCC 14580 / DSM 13 / JCM 2505 / CCUG 7422 / NBRC 12200 / NCIMB 9375 / NCTC 10341 / NRRL NRS-1264 / Gibson 46).